The primary structure comprises 284 residues: Pantothenate synthetase (284 aa).

30–37 (MGNLHDGH) provides a ligand contact to ATP. Histidine 37 serves as the catalytic Proton donor. Glutamine 61 is a binding site for (R)-pantoate. A beta-alanine-binding site is contributed by glutamine 61. 149-152 (GEKD) lines the ATP pocket. Glutamine 155 contributes to the (R)-pantoate binding site. Residues valine 178 and 186–189 (LSSR) each bind ATP.

This sequence belongs to the pantothenate synthetase family. Homodimer.

It localises to the cytoplasm. It carries out the reaction (R)-pantoate + beta-alanine + ATP = (R)-pantothenate + AMP + diphosphate + H(+). It participates in cofactor biosynthesis; (R)-pantothenate biosynthesis; (R)-pantothenate from (R)-pantoate and beta-alanine: step 1/1. Functionally, catalyzes the condensation of pantoate with beta-alanine in an ATP-dependent reaction via a pantoyl-adenylate intermediate. The polypeptide is Pantothenate synthetase (Erwinia tasmaniensis (strain DSM 17950 / CFBP 7177 / CIP 109463 / NCPPB 4357 / Et1/99)).